Reading from the N-terminus, the 140-residue chain is Transmembrane protein 234 homolog (140 aa).

4 helical membrane passes run 14 to 34 (IYAV…NPFI), 64 to 84 (WQYL…VLTL), 88 to 108 (ELSL…AITA), and 116 to 136 (SGWK…ICGL).

It belongs to the TMEM234 family.

It localises to the membrane. The polypeptide is Transmembrane protein 234 homolog (Anopheles gambiae (African malaria mosquito)).